Here is a 708-residue protein sequence, read N- to C-terminus: FACT complex subunit SSRP1 (708 aa).

Position 2 is an N-acetylalanine (Ala-2). Lys-90 is covalently cross-linked (Glycyl lysine isopeptide (Lys-Gly) (interchain with G-Cter in SUMO2)). Thr-170 bears the Phosphothreonine mark. Lys-233 bears the N6-acetyllysine mark. Residues Lys-296 and Lys-364 each participate in a glycyl lysine isopeptide (Lys-Gly) (interchain with G-Cter in SUMO2) cross-link. N6-acetyllysine is present on Lys-413. Residue Tyr-441 is modified to Phosphotyrosine. The residue at position 444 (Ser-444) is a Phosphoserine. Position 452 is a phosphotyrosine (Tyr-452). The segment at Glu-458–Glu-708 is disordered. The span at Ser-470 to Asp-496 shows a compositional bias: acidic residues. A Phosphoserine modification is found at Ser-471. Low complexity predominate over residues Ser-497–Glu-507. Position 510 is a phosphoserine; by CK2 (Ser-510). Composition is skewed to basic and acidic residues over residues Arg-512–Ala-546 and Leu-577–Arg-624. Lys-542 bears the N6-acetyllysine mark. Positions Pro-547–Glu-615 form a DNA-binding region, HMG box. A compositionally biased stretch (basic residues) spans Asp-625–Lys-634. The span at Pro-643–Ser-659 shows a compositional bias: low complexity. Residue Ser-657 is modified to Phosphoserine; by CK2. Ser-659, Ser-667, Ser-668, Ser-671, Ser-672, and Ser-673 each carry phosphoserine. Ser-688 is subject to Phosphoserine; by CK2. The segment covering Thr-695–Glu-708 has biased composition (polar residues).

Belongs to the SSRP1 family. As to quaternary structure, interacts with MYOG (via C-terminal region). Component of the FACT complex, a stable heterodimer of SSRP1 and SUPT16H. Also a component of a CK2-SPT16-SSRP1 complex which forms following UV irradiation, composed of SSRP1, SUPT16H, CSNK2A1, CSNK2A2 and CSNK2B. Binds to histone H3-H4 tetramers, but not to intact nucleosomes. Identified in a centromere complex containing histones H2A, H2B and H4, and at least CENPA, CENPB, CENPC, CENPT, CENPN, HJURP, SUPT16H, SSRP1 and RSF1. Interacts with isoform gamma of TP63. Interacts with FYTTD1/UIF. Interacts with SRF. Interacts with NEK9. In terms of processing, phosphorylated by CK2 following UV but not gamma irradiation. Phosphorylation inhibits its DNA-binding activity. Post-translationally, ubiquitinated. Polyubiquitinated following caspase cleavage resulting in degradation of the N-terminal ubiquitinated part of the cleaved protein. Sumoylated.

It localises to the nucleus. The protein resides in the chromosome. The protein localises to the nucleolus. Its function is as follows. Component of the FACT complex, a general chromatin factor that acts to reorganize nucleosomes. The FACT complex is involved in multiple processes that require DNA as a template such as mRNA elongation, DNA replication and DNA repair. During transcription elongation the FACT complex acts as a histone chaperone that both destabilizes and restores nucleosomal structure. It facilitates the passage of RNA polymerase II and transcription by promoting the dissociation of one histone H2A-H2B dimer from the nucleosome, then subsequently promotes the reestablishment of the nucleosome following the passage of RNA polymerase II. The FACT complex is probably also involved in phosphorylation of 'Ser-392' of p53/TP53 via its association with CK2 (casein kinase II). Binds specifically to double-stranded DNA. Also acts as a transcriptional coactivator for p63/TP63. The chain is FACT complex subunit SSRP1 (Ssrp1) from Mus musculus (Mouse).